The chain runs to 135 residues: Transcriptional activator protein (135 aa).

The Nuclear localization signal motif lies at 17–32; sequence KVQHRAAKRKRIRRKR. Residues 37–54 fold into a zinc finger; that stretch reads CGCSYYVHINCHNHGFTH. The segment at 77-115 is disordered; that stretch reads LFQDHSTRQQTVRNEPGHNNRPDTVQPQPEESVGTTSML. The segment covering 98-114 has biased composition (polar residues); that stretch reads PDTVQPQPEESVGTTSM. The transactivation stretch occupies residues 120 to 135; that stretch reads GLDDLTASDLAFLEGI.

It belongs to the geminiviridae transcriptional activator protein family. In terms of assembly, monomer. Homodimer. Homooligomer. Self-interaction correlates with nuclear localization and efficient activation of transcription. Monomers suppress local silencing by interacting with and inactivating host adenosine kinase 2 (ADK2) in the cytoplasm. Interacts with and inhibits host SNF1 kinase. Binds to ssDNA. In terms of processing, phosphorylated.

It localises to the host nucleus. Its subcellular location is the host cytoplasm. Functionally, strong activator of the late viral genes promoters. Enhances the expression of the capsid protein and nuclear shuttle protein. Acts as a suppressor of RNA-mediated gene silencing, also known as post-transcriptional gene silencing (PTGS), a mechanism of plant viral defense that limits the accumulation of viral RNAs. Suppresses the host RNA silencing by inhibiting adenosine kinase 2 (ADK2), a kinase involved in a general methylation pathway. Also suppresses the host basal defense by interacting with and inhibiting SNF1 kinase, a key regulator of cell metabolism implicated in innate antiviral defense. Determines pathogenicity. The polypeptide is Transcriptional activator protein (Indian cassava mosaic virus (ICMV)).